Reading from the N-terminus, the 420-residue chain is Transcription factor TCP4 (420 aa).

Positions Met1–Gly27 are disordered. A TCP domain is found at Arg45–Leu103. 4 disordered regions span residues Asn121–Asp176, Leu228–Pro256, His353–Ile379, and Gln399–His420. The span at Lys410–His420 shows a compositional bias: polar residues.

Interacts with AHL27 and AHL29. Interacts with SPL. Interacts with JGB. Interacts with GI (via N-terminus). Expressed in cotyledons, particularly in the vascular region, in leaves, roots, buds, flowers and immature siliques.

The protein resides in the nucleus. In terms of biological role, transcription factor playing a pivotal role in the control of morphogenesis of shoot organs by negatively regulating the expression of boundary-specific genes such as CUC genes, probably through the induction of miRNA (e.g. miR164). Required during early steps of embryogenesis. Participates in ovule development. Activates LOX2 expression by binding to the 5'-GGACCA-3' motif found in its promoter. Activates YUC5 transcription by binding to the 5'-GTGGGCCA-3' motif found in its promoter. Through the activation of YUC5 transcription, integrates the auxin response to a brassinosteroid-dependent molecular circuit that promotes cell elongation in hypocotyls. Activates GIS transcription by binding to the 5'-TGGTCC-3' motif found in its promoter. Involved in the regulation of trichome branching through the activation of GIS transcription. Activates CO transcription by binding to the 5'-GGACCAC-3' motif found in its promoter. Involved in the regulation of photoperiodic flowering through the activation of CO transcription. Activates TCL1 and TCL2 transcription by binding to the 5'-TGGCCA-3' and 5'-GTGGACCA-3' motifS found in their respective promoters. Involved in the suppression of trichome initiaition through the activation of TCL1 and TCL2 transcription. Activates HAT2 transcription by binding to the 5'-TGGTCCAC-3' motif found in its promoter. Through the activation of HAT2 transcription, involved in the auxin-independent reprogramming of mitotic cells to exit division and acquire differentiation competence within the transition zone. The protein is Transcription factor TCP4 (TCP4) of Arabidopsis thaliana (Mouse-ear cress).